Consider the following 955-residue polypeptide: Leucine--tRNA ligase (955 aa).

The 'HIGH' region signature appears at 66-77 (PYPSGSGLHVGH). A 'KMSKS' region motif is present at residues 725–729 (KMGKS). Lys-728 contributes to the ATP binding site.

It belongs to the class-I aminoacyl-tRNA synthetase family.

Its subcellular location is the cytoplasm. It carries out the reaction tRNA(Leu) + L-leucine + ATP = L-leucyl-tRNA(Leu) + AMP + diphosphate. This Saccharopolyspora erythraea (strain ATCC 11635 / DSM 40517 / JCM 4748 / NBRC 13426 / NCIMB 8594 / NRRL 2338) protein is Leucine--tRNA ligase.